The chain runs to 250 residues: Large ribosomal subunit protein uL4 (250 aa).

2 disordered regions span residues 1–20 and 51–101; these read MQVT…DLPR and YAGL…HGLD. Basic and acidic residues predominate over residues 92–101; sequence PKAEKDHGLD.

This sequence belongs to the universal ribosomal protein uL4 family. As to quaternary structure, part of the 50S ribosomal subunit.

Functionally, one of the primary rRNA binding proteins, this protein initially binds near the 5'-end of the 23S rRNA. It is important during the early stages of 50S assembly. It makes multiple contacts with different domains of the 23S rRNA in the assembled 50S subunit and ribosome. In terms of biological role, forms part of the polypeptide exit tunnel. In Halobacterium salinarum (strain ATCC 29341 / DSM 671 / R1), this protein is Large ribosomal subunit protein uL4.